The primary structure comprises 404 residues: Glucose-1-phosphate adenylyltransferase (404 aa).

Residues tyrosine 99, glycine 164, glutamate 179–lysine 180, and serine 197 contribute to the alpha-D-glucose 1-phosphate site.

This sequence belongs to the bacterial/plant glucose-1-phosphate adenylyltransferase family.

The enzyme catalyses alpha-D-glucose 1-phosphate + ATP + H(+) = ADP-alpha-D-glucose + diphosphate. It participates in capsule biogenesis; capsule polysaccharide biosynthesis. It functions in the pathway glycan biosynthesis; glycogen biosynthesis. Functionally, involved in the biosynthesis of ADP-glucose, a building block, required in the biosynthesis of maltose-1-phosphate (M1P) and in the elongation reactions to produce linear alpha-1,4-glucans. Catalyzes the reaction between ATP and alpha-D-glucose 1-phosphate (G1P) to produce pyrophosphate and ADP-Glc. The polypeptide is Glucose-1-phosphate adenylyltransferase (Mycobacterium bovis (strain ATCC BAA-935 / AF2122/97)).